Consider the following 293-residue polypeptide: Probable 2-(5''-triphosphoribosyl)-3'-dephosphocoenzyme-A synthase (293 aa).

Belongs to the CitG/MdcB family.

It carries out the reaction 3'-dephospho-CoA + ATP = 2'-(5''-triphospho-alpha-D-ribosyl)-3'-dephospho-CoA + adenine. In terms of biological role, involved in the formation of 2-(5''-phosphoribosyl)-3'-dephosphocoenzyme-A, the prosthetic group of the acyl-carrier protein of the malonate decarboxylase. This chain is Probable 2-(5''-triphosphoribosyl)-3'-dephosphocoenzyme-A synthase, found in Pseudomonas paraeruginosa (strain DSM 24068 / PA7) (Pseudomonas aeruginosa (strain PA7)).